The sequence spans 164 residues: MRLTSKGRYAVTAMLDVALHSQEGPVPLADISERQGISLSYLEQLFSRLRKNGLVASVRGPGGGYLLGKNANEIAVGMVISAVDESVDATRCQGRESCQGGDRCLTHTLWRDLSDRITDFLNNITLDELVNNKEVLNVADRQDTDTRRTANGRIQETINVNLRA.

The 130-residue stretch at 2–131 (RLTSKGRYAV…NNITLDELVN (130 aa)) folds into the HTH rrf2-type domain. The H-T-H motif DNA-binding region spans 28-51 (LADISERQGISLSYLEQLFSRLRK). The [2Fe-2S] cluster site is built by Cys92, Cys98, and Cys104.

Requires [2Fe-2S] cluster as cofactor.

Regulates the transcription of several operons and genes involved in the biogenesis of Fe-S clusters and Fe-S-containing proteins. The chain is HTH-type transcriptional regulator IscR from Pectobacterium atrosepticum (strain SCRI 1043 / ATCC BAA-672) (Erwinia carotovora subsp. atroseptica).